The following is a 198-amino-acid chain: Na(+)-translocating NADH-quinone reductase subunit E (198 aa).

Transmembrane regions (helical) follow at residues 11 to 31, 35 to 55, 77 to 97, 110 to 130, 140 to 160, and 176 to 196; these read SVFI…FLAV, VSTA…AVPV, FLNF…LEMV, GIFL…SFMV, VVYG…LAGI, and LGIT…FSGI.

It belongs to the NqrDE/RnfAE family. Composed of six subunits; NqrA, NqrB, NqrC, NqrD, NqrE and NqrF.

The protein resides in the cell inner membrane. It catalyses the reaction a ubiquinone + n Na(+)(in) + NADH + H(+) = a ubiquinol + n Na(+)(out) + NAD(+). Functionally, NQR complex catalyzes the reduction of ubiquinone-1 to ubiquinol by two successive reactions, coupled with the transport of Na(+) ions from the cytoplasm to the periplasm. NqrA to NqrE are probably involved in the second step, the conversion of ubisemiquinone to ubiquinol. In Pasteurella multocida (strain Pm70), this protein is Na(+)-translocating NADH-quinone reductase subunit E.